Consider the following 644-residue polypeptide: Exoribonuclease 2 (644 aa).

One can recognise an RNB domain in the interval 189–516; sequence REDLTALDFV…NHRLLKAVIK (328 aa). In terms of domain architecture, S1 motif spans 561–643; it reads DTRFAAEIVD…ETRSIIARPV (83 aa).

It belongs to the RNR ribonuclease family. RNase II subfamily.

It is found in the cytoplasm. It catalyses the reaction Exonucleolytic cleavage in the 3'- to 5'-direction to yield nucleoside 5'-phosphates.. Functionally, involved in mRNA degradation. Hydrolyzes single-stranded polyribonucleotides processively in the 3' to 5' direction. This chain is Exoribonuclease 2, found in Shigella boydii serotype 18 (strain CDC 3083-94 / BS512).